A 752-amino-acid polypeptide reads, in one-letter code: Myotubularin-related protein 10 (752 aa).

The Myotubularin phosphatase domain maps to F206–F636. A coiled-coil region spans residues T652–T683.

It belongs to the protein-tyrosine phosphatase family. Non-receptor class myotubularin subfamily.

This is Myotubularin-related protein 10 (mtmr10) from Danio rerio (Zebrafish).